We begin with the raw amino-acid sequence, 993 residues long: Signal peptide, CUB and EGF-like domain-containing protein 3 (993 aa).

The first 20 residues, 1-20 (MGSGRVPGLCLLVLLVHARA), serve as a signal peptide directing secretion. The region spanning 29–69 (DVDECVEGTDNCHIDAICQNTPRSYKCICKSGYTGDGKHCK) is the EGF-like 1; calcium-binding domain. 26 disulfides stabilise this stretch: cysteine 33-cysteine 46, cysteine 40-cysteine 55, cysteine 57-cysteine 68, cysteine 74-cysteine 86, cysteine 82-cysteine 95, cysteine 97-cysteine 110, cysteine 116-cysteine 127, cysteine 123-cysteine 136, cysteine 161-cysteine 172, cysteine 168-cysteine 182, cysteine 184-cysteine 197, cysteine 201-cysteine 212, cysteine 208-cysteine 221, cysteine 223-cysteine 236, cysteine 240-cysteine 251, cysteine 247-cysteine 260, cysteine 262-cysteine 275, cysteine 281-cysteine 292, cysteine 288-cysteine 301, cysteine 303-cysteine 316, cysteine 322-cysteine 332, cysteine 328-cysteine 341, cysteine 343-cysteine 355, cysteine 361-cysteine 372, cysteine 368-cysteine 381, and cysteine 383-cysteine 397. Positions 70–111 (DVDECEREDNAGCVHDCVNIPGNYRCTCYDGFHLAHDGHNCL) constitute an EGF-like 2; calcium-binding domain. The 37-residue stretch at 112–148 (DVDECAEGNGGCQQSCVNMMGSYECHCREGFFLSDNQ) folds into the EGF-like 3; calcium-binding domain. EGF-like domains follow at residues 157–198 (EGMN…RDCK), 199–237 (LTCNYGNGGCQHTCDDTEQGPRCGCHIKFVLHTDGKTCI), and 238–276 (ETCAVNNGGCDSKCHDAATGVHCTCPVGFMLQPDRKTCK). In terms of domain architecture, EGF-like 7; calcium-binding spans 277-317 (DIDECRLNNGGCDHICRNTVGSFECSCKKGYKLLINERNCQ). Positions 318–356 (DIDECSFDRTCDHICVNTPGSFQCLCHRGYLLYGITHCG) constitute an EGF-like 8; calcium-binding domain. In terms of domain architecture, EGF-like 9; calcium-binding spans 357-398 (DVDECSINRGGCRFGCINTPGSYQCTCPAGQGRLHWNGKDCT). Residues asparagine 417, asparagine 464, asparagine 685, asparagine 756, and asparagine 785 are each glycosylated (N-linked (GlcNAc...) asparagine). Intrachain disulfides connect cysteine 804/cysteine 830 and cysteine 857/cysteine 878. The CUB domain occupies 804 to 916 (CGGELGEFTG…RGFQIPYVTY (113 aa)).

Forms homooligomers. Forms heterooligomers with SCUBE1 and SCUBE2. Interacts with TGFBR2 through the CUB domain; this interaction does not affect TGFB1-binding to TGFBR2. Interacts with BMP2, BMP4 and BMP7; the interaction is mediated by the CUB domain. Interacts with BMPR1A, BMPR1B and BMPR2; the interaction with BMPR1A and BMPR1B is BMP2- and BMP4-dependent. N-glycosylated. Post-translationally, proteolytic cleavage produces a CUB-containing C-terminal fragment that retains the ability to bind to TGFBR2. This reaction is catalyzed in vitro by MMP2 and, to a lesser extent, by MMP9. Highly expressed in osteoblasts. In normal lung, mainly expressed in bronchial epithelial cells. Tends to be up-regulated in lung cancer cells.

It localises to the secreted. It is found in the cell surface. Functionally, is a positive regulator of the BMP signaling pathway, required for proper chondrogenesis, osteogenesis and skeletal development. It acts as a coreceptor for BMP ligands, particularly BMP2 and BMP4, facilitating their interactions with BMP type I receptors. It is required for ligand-induced recruitment of BMP receptors to lipid rafts. Binds to TGFBR2 and activates TGFB signaling. In lung cancer cells, could serve as an endogenous autocrine and paracrine ligand of TGFBR2, which could regulate TGFBR2 signaling and hence modulate epithelial-mesenchymal transition and cancer progression. The polypeptide is Signal peptide, CUB and EGF-like domain-containing protein 3 (Homo sapiens (Human)).